The chain runs to 704 residues: Eukaryotic translation initiation factor 2-alpha kinase 1 (704 aa).

Positions 224-667 constitute a Protein kinase domain; the sequence is FEELELLGKG…LTSNLFHDLV (444 aa). Residues 230-238 and Lys-253 each bind ATP; that span reads LGKGGYGSV. Asp-491 functions as the Proton acceptor in the catalytic mechanism.

Belongs to the protein kinase superfamily. Ser/Thr protein kinase family. GCN2 subfamily. Post-translationally, autophosphorylated.

The enzyme catalyses L-seryl-[protein] + ATP = O-phospho-L-seryl-[protein] + ADP + H(+). It catalyses the reaction L-threonyl-[protein] + ATP = O-phospho-L-threonyl-[protein] + ADP + H(+). Functionally, mediates down-regulation of protein synthesis in response to stress conditions by the phosphorylation of the alpha subunit of eIF-2 (tif211) on 'Ser-52'. Protein synthesis is inhibited at the level of initiation. Activity is inhibited in the presence of heme. This Schizosaccharomyces pombe (strain 972 / ATCC 24843) (Fission yeast) protein is Eukaryotic translation initiation factor 2-alpha kinase 1 (hri1).